Reading from the N-terminus, the 427-residue chain is Serine--tRNA ligase (427 aa).

An L-serine-binding site is contributed by 231 to 233 (TAE). Residue 262–264 (RSE) participates in ATP binding. Residue Glu285 coordinates L-serine. Residue 349–352 (EISS) coordinates ATP. Ser385 contacts L-serine.

It belongs to the class-II aminoacyl-tRNA synthetase family. Type-1 seryl-tRNA synthetase subfamily. In terms of assembly, homodimer. The tRNA molecule binds across the dimer.

It localises to the cytoplasm. It carries out the reaction tRNA(Ser) + L-serine + ATP = L-seryl-tRNA(Ser) + AMP + diphosphate + H(+). The catalysed reaction is tRNA(Sec) + L-serine + ATP = L-seryl-tRNA(Sec) + AMP + diphosphate + H(+). The protein operates within aminoacyl-tRNA biosynthesis; selenocysteinyl-tRNA(Sec) biosynthesis; L-seryl-tRNA(Sec) from L-serine and tRNA(Sec): step 1/1. In terms of biological role, catalyzes the attachment of serine to tRNA(Ser). Is also able to aminoacylate tRNA(Sec) with serine, to form the misacylated tRNA L-seryl-tRNA(Sec), which will be further converted into selenocysteinyl-tRNA(Sec). The protein is Serine--tRNA ligase of Brucella canis (strain ATCC 23365 / NCTC 10854 / RM-666).